We begin with the raw amino-acid sequence, 147 residues long: Small ribosomal subunit protein uS12 (147 aa).

It belongs to the universal ribosomal protein uS12 family. Part of the 30S ribosomal subunit.

Its function is as follows. With S4 and S5 plays an important role in translational accuracy. Located at the interface of the 30S and 50S subunits. This is Small ribosomal subunit protein uS12 from Ignicoccus hospitalis (strain KIN4/I / DSM 18386 / JCM 14125).